The primary structure comprises 436 residues: MHKLFKNAPFFDFEAIRILGTTCYGGADVAEVFEAVDQIKNNDPETWETAWRIQAERAEKLAAEALEHGDRDAALAGYLRASNYTRASGYMYVSRAESSGEALVQDARALPIAEKVGELFRKAIPLMKGSVHTLGIPYEEYALPGYLYLPPPWRRIPGRKIPILVNSGGADSCQEELFYLNPAAGPGQGYAVVTFDGPGQGIMLRKYGLEMRPDWEAVTGRVIDFLEEYAAENPHLELDLNCIAVSGASMGGYYALRAAADQRVKACVSIDPFYDMWDFGTAHVSPIFIHAWTSGWISGGFVDNLMALLSRLSFQLRWEISVTGTFFGLSSPSQILLHMKKYTLRSTEEEPEGFLSRVICPVLLSGAGKSLYLDVDNHTRQCYDGLVNVAERNKQLWIPESEGQGSLQAKMGAFRLCNQRTYRFLDECFGIMRKSL.

Catalysis depends on Ser249, which acts as the Nucleophile.

It belongs to the AB hydrolase superfamily. FUS2 hydrolase family. As to quaternary structure, homodimer.

Its pathway is mycotoxin biosynthesis. Its function is as follows. Hydrolyase; part of the gene cluster that mediates the biosynthesis of a family of the mycotoxins cytochalasins E and K. The hybrid PKS-NRPS synthetase ccsA and the enoyl reductase ccsC are responsible for fusion of phenylalanine with an octaketide backbone and subsequent release of the stable tetramic acid precursor. The polyketide synthase module (PKS) of the PKS-NRPS ccsA is responsible for the synthesis of the octaketide backbone. The downstream nonribosomal peptide synthetase (NRPS) amidates the carboxyl end of the octaketide with a phenylalanine. A reductase-like domain (R) at the C-terminus catalyzes the reductive release of the polyketide-amino acid intermediate. Because ccsA lacks a designated enoylreductase (ER) domain, the required activity is provided the enoyl reductase ccsC. Upon formation of the 11-membered carbocycle-fused perhydroisoindolone intermediate, a number of oxidative steps are required to afford the final cytochalasin E and K, including two hydroxylations at C17 and C18, one alcohol oxidation at C17, one epoxidation at C6 and C7 and two Baeyer-Villiger oxidations. The oxidative modification at C17, C18 and the C6-C7 epoxidation are likely to be catalyzed by the two cytochrome P450 oxygenases ccsD and ccsG. CcsD may be responsible for the epoxidation of the C6-C7 double bond. CcsG may be responsible for the successive oxidative modifications at C17 and C18. The double Baeyer-Villiger oxidations of ketocytochalasin to precytochalasin and cytochalasin Z(16) are among the final steps leading to cytochalasin E and K and are catalyzed by ccsB. The first oxygen insertion step follows that of the classic BVMO mechanism, generating the ester precytochalasin. Release of precytochalasin into an aqueous environment can generate the shunt product iso-precytochalasin through spontaneous isomerization. Alternatively, precytochalasin can undergo further oxidation by ccsB to yield the in-line carbonate-containing cytochalasin Z(16). Cytochalasin Z(16) is a precursor to cytochalasin E and cytochalasin K, whereas iso-precytochalasin is a precursor to cytochalasin Z(17) and rosellichalasin. The hydrolyase ccsE may catalyze hydrolysis of epoxide bond in cytochalasin E to afford cytochalasin K. The function of ccsF has not been assigned but it may play a role in post-PKS-NRPS biosynthetic step, resistance or transport of cytochalasins and related PKS-NRPS products. The chain is Hydrolyase ccsE from Aspergillus clavatus (strain ATCC 1007 / CBS 513.65 / DSM 816 / NCTC 3887 / NRRL 1 / QM 1276 / 107).